Reading from the N-terminus, the 383-residue chain is MSFNSSHLLPPQEDLPLRHFTDQSQQPPPQRHFSETPSLVTASFLNLPTTLTTADSDLAPPHRNGDNSVADTNPRWLSFHSEMQNTGEVRSEVIDGVNADGETILGVVGGEDWRSASYKAAILRHPMYEQLLAAHVACLRVATPVDQIPRIDAQLSQLHTVAAKYSTLGVVVDNKELDHFMSHYVVLLCSFKEQLQHHVCVHAMEAITACWEIEQSLQSLTGVSPSESNGKTMSDDEDDNQVESEVNMFDGSLDGSDCLMGFGPLVPTERERSLMERVKKELKHELKQGFKEKIVDIREEIMRKRRAGKLPGDTTSVLKEWWRTHSKWPYPTEEDKAKLVQETGLQLKQINNWFINQRKRNWNSNSSTSSTLTKNKRKRTGKS.

Disordered regions lie at residues 1-35 (MSFNSSHLLPPQEDLPLRHFTDQSQQPPPQRHFSE) and 52-73 (TTADSDLAPPHRNGDNSVADTN). The region spanning 281–301 (ELKHELKQGFKEKIVDIREEI) is the ELK domain. A DNA-binding region (homeobox; TALE-type) is located at residues 302–365 (MRKRRAGKLP…NQRKRNWNSN (64 aa)). A disordered region spans residues 361 to 383 (NWNSNSSTSSTLTKNKRKRTGKS). A compositionally biased stretch (low complexity) spans 362–373 (WNSNSSTSSTLT). Residues 374–383 (KNKRKRTGKS) are compositionally biased toward basic residues.

Belongs to the TALE/KNOX homeobox family. As to quaternary structure, may form heterodimeric complex with the TALE/BELL protein BEL1, BLH1 and BLH2. Interacts with OFP1, OFP2, OFP3 and OFP4.

The protein resides in the nucleus. This Arabidopsis thaliana (Mouse-ear cress) protein is Homeobox protein knotted-1-like 5 (KNAT5).